Here is a 390-residue protein sequence, read N- to C-terminus: NADH-quinone oxidoreductase subunit D (390 aa).

It belongs to the complex I 49 kDa subunit family. NDH-1 is composed of 14 different subunits. Subunits NuoB, C, D, E, F, and G constitute the peripheral sector of the complex.

The protein localises to the cell membrane. It carries out the reaction a quinone + NADH + 5 H(+)(in) = a quinol + NAD(+) + 4 H(+)(out). Functionally, NDH-1 shuttles electrons from NADH, via FMN and iron-sulfur (Fe-S) centers, to quinones in the respiratory chain. The immediate electron acceptor for the enzyme in this species is believed to be ubiquinone. Couples the redox reaction to proton translocation (for every two electrons transferred, four hydrogen ions are translocated across the cytoplasmic membrane), and thus conserves the redox energy in a proton gradient. This chain is NADH-quinone oxidoreductase subunit D, found in Wolbachia pipientis subsp. Culex pipiens (strain wPip).